A 403-amino-acid polypeptide reads, in one-letter code: Aminomethyltransferase, mitochondrial (403 aa).

Residues 1–28 (MQRAMTVVPHLGLRLQALPLALGRPLSR) constitute a mitochondrion transit peptide. Substrate-binding residues include E232, R261, and Y399.

The protein belongs to the GcvT family. In terms of assembly, the glycine cleavage system is composed of four proteins: P, T, L and H.

It localises to the mitochondrion. The catalysed reaction is N(6)-[(R)-S(8)-aminomethyldihydrolipoyl]-L-lysyl-[protein] + (6S)-5,6,7,8-tetrahydrofolate = N(6)-[(R)-dihydrolipoyl]-L-lysyl-[protein] + (6R)-5,10-methylene-5,6,7,8-tetrahydrofolate + NH4(+). In terms of biological role, the glycine cleavage system catalyzes the degradation of glycine. This is Aminomethyltransferase, mitochondrial from Canis lupus familiaris (Dog).